The primary structure comprises 100 residues: Small ribosomal subunit protein uS14c (100 aa).

Belongs to the universal ribosomal protein uS14 family. In terms of assembly, part of the 30S ribosomal subunit.

Its subcellular location is the plastid. Binds 16S rRNA, required for the assembly of 30S particles. This Euglena longa (Euglenophycean alga) protein is Small ribosomal subunit protein uS14c.